A 119-amino-acid polypeptide reads, in one-letter code: Ribosome-binding factor A (119 aa).

This sequence belongs to the RbfA family. As to quaternary structure, monomer. Binds 30S ribosomal subunits, but not 50S ribosomal subunits or 70S ribosomes.

The protein resides in the cytoplasm. Its function is as follows. One of several proteins that assist in the late maturation steps of the functional core of the 30S ribosomal subunit. Associates with free 30S ribosomal subunits (but not with 30S subunits that are part of 70S ribosomes or polysomes). Required for efficient processing of 16S rRNA. May interact with the 5'-terminal helix region of 16S rRNA. The chain is Ribosome-binding factor A from Buchnera aphidicola subsp. Acyrthosiphon pisum (strain Tuc7).